The following is a 176-amino-acid chain: ATP synthase subunit b 2 (176 aa).

A helical transmembrane segment spans residues Ile-29 to Pro-49.

Belongs to the ATPase B chain family. In terms of assembly, F-type ATPases have 2 components, F(1) - the catalytic core - and F(0) - the membrane proton channel. F(1) has five subunits: alpha(3), beta(3), gamma(1), delta(1), epsilon(1). F(0) has three main subunits: a(1), b(2) and c(10-14). The alpha and beta chains form an alternating ring which encloses part of the gamma chain. F(1) is attached to F(0) by a central stalk formed by the gamma and epsilon chains, while a peripheral stalk is formed by the delta and b chains.

Its subcellular location is the cell inner membrane. Functionally, f(1)F(0) ATP synthase produces ATP from ADP in the presence of a proton or sodium gradient. F-type ATPases consist of two structural domains, F(1) containing the extramembraneous catalytic core and F(0) containing the membrane proton channel, linked together by a central stalk and a peripheral stalk. During catalysis, ATP synthesis in the catalytic domain of F(1) is coupled via a rotary mechanism of the central stalk subunits to proton translocation. Component of the F(0) channel, it forms part of the peripheral stalk, linking F(1) to F(0). The b'-subunit is a diverged and duplicated form of b found in plants and photosynthetic bacteria. The chain is ATP synthase subunit b 2 (atpF2) from Roseobacter denitrificans (strain ATCC 33942 / OCh 114) (Erythrobacter sp. (strain OCh 114)).